The primary structure comprises 32 residues: Cytochrome b6-f complex subunit 7 (32 aa).

Residues 9–27 (AAVFWVLIPVGLLGGVLLL) traverse the membrane as a helical segment.

Belongs to the PetM family. In terms of assembly, the 4 large subunits of the cytochrome b6-f complex are cytochrome b6, subunit IV (17 kDa polypeptide, PetD), cytochrome f and the Rieske protein, while the 4 small subunits are PetG, PetL, PetM and PetN. The complex functions as a dimer.

It is found in the cellular thylakoid membrane. Its function is as follows. Component of the cytochrome b6-f complex, which mediates electron transfer between photosystem II (PSII) and photosystem I (PSI), cyclic electron flow around PSI, and state transitions. The chain is Cytochrome b6-f complex subunit 7 from Prochlorococcus marinus (strain NATL1A).